The primary structure comprises 208 residues: Holliday junction branch migration complex subunit RuvA (208 aa).

Positions 1–63 are domain I; the sequence is MIGMLTGRVE…QDAITLHGFL (63 aa). The domain II stretch occupies residues 64–142; the sequence is DRDAKKTFLQ…LSQIEGASAQ (79 aa). Residues 143 to 151 form a flexible linker region; it reads AATSKSPVD. Positions 151 to 208 are domain III; that stretch reads DTGTEQVVEGLISLGWRQQDAQQAVAEACAENDIPTPLATDDVPRVLRLALALMDRGR.

This sequence belongs to the RuvA family. As to quaternary structure, homotetramer. Forms an RuvA(8)-RuvB(12)-Holliday junction (HJ) complex. HJ DNA is sandwiched between 2 RuvA tetramers; dsDNA enters through RuvA and exits via RuvB. An RuvB hexamer assembles on each DNA strand where it exits the tetramer. Each RuvB hexamer is contacted by two RuvA subunits (via domain III) on 2 adjacent RuvB subunits; this complex drives branch migration. In the full resolvosome a probable DNA-RuvA(4)-RuvB(12)-RuvC(2) complex forms which resolves the HJ.

It is found in the cytoplasm. The RuvA-RuvB-RuvC complex processes Holliday junction (HJ) DNA during genetic recombination and DNA repair, while the RuvA-RuvB complex plays an important role in the rescue of blocked DNA replication forks via replication fork reversal (RFR). RuvA specifically binds to HJ cruciform DNA, conferring on it an open structure. The RuvB hexamer acts as an ATP-dependent pump, pulling dsDNA into and through the RuvAB complex. HJ branch migration allows RuvC to scan DNA until it finds its consensus sequence, where it cleaves and resolves the cruciform DNA. The protein is Holliday junction branch migration complex subunit RuvA of Bifidobacterium longum (strain DJO10A).